The chain runs to 311 residues: Olfactory receptor 5M8 (311 aa).

Residues 1–24 (MRRNCTLVTEFILLGLTSRRELQI) lie on the Extracellular side of the membrane. N4 carries an N-linked (GlcNAc...) asparagine glycan. Residues 25 to 45 (LLFTLFLAIYMVTVAGNLGMI) form a helical membrane-spanning segment. The Cytoplasmic portion of the chain corresponds to 46–53 (VLIQANAW). Residues 54–74 (LHMPMYFFLSHLSFVDLCFSS) form a helical membrane-spanning segment. The Extracellular portion of the chain corresponds to 75–98 (NVTPKMLEIFLSEKKSISYPACLV). A disulfide bridge connects residues C96 and C188. The chain crosses the membrane as a helical span at residues 99 to 119 (QCYLFIALVHVEIYILAVMAF). The Cytoplasmic portion of the chain corresponds to 120-138 (DRYMAICNPLLYGSRMSKS). A helical transmembrane segment spans residues 139–159 (VCSFLITVPYVYGALTGLMET). The Extracellular portion of the chain corresponds to 160 to 195 (MWTYNLAFCGPNEINHFYCADPPLIKLACSDTYNKE). The chain crosses the membrane as a helical span at residues 196–216 (LSMFIVAGWNLSFSLFIICIS). Over 217–236 (YLYIFPAILKIRSTEGRQKA) the chain is Cytoplasmic. A helical membrane pass occupies residues 237-257 (FSTCGSHLTAVTIFYATLFFM). Residues 258 to 270 (YLRPPSKESVEQG) are Extracellular-facing. The chain crosses the membrane as a helical span at residues 271–291 (KMVAVFYTTVIPMLNLIIYSL). At 292–311 (RNKNVKEALIKELSMKIYFS) the chain is on the cytoplasmic side.

This sequence belongs to the G-protein coupled receptor 1 family.

Its subcellular location is the cell membrane. Functionally, odorant receptor. The chain is Olfactory receptor 5M8 (OR5M8) from Homo sapiens (Human).